Consider the following 305-residue polypeptide: Spermatogenesis-associated protein 4 (305 aa).

The Calponin-homology (CH) domain occupies serine 49–arginine 155.

In terms of tissue distribution, highly expressed in testis, the expression is observed precisely in seminiferous tubules.

Its subcellular location is the nucleus. May play a role in apoptosis regulation. The polypeptide is Spermatogenesis-associated protein 4 (SPATA4) (Homo sapiens (Human)).